The primary structure comprises 469 residues: Ribosomal protein uS12 methylthiotransferase RimO (469 aa).

Residues 34–144 (NKIGFVSLGC…VLEHVHQFAP (111 aa)) enclose the MTTase N-terminal domain. The [4Fe-4S] cluster site is built by Cys43, Cys79, Cys108, Cys176, Cys180, and Cys183. In terms of domain architecture, Radical SAM core spans 162-399 (LTPKHYAYLK…MLVQQEISAA (238 aa)). One can recognise a TRAM domain in the interval 402 to 468 (QKRIGSTMKV…EYDLWGSLVR (67 aa)).

It belongs to the methylthiotransferase family. RimO subfamily. The cofactor is [4Fe-4S] cluster.

The protein resides in the cytoplasm. The catalysed reaction is L-aspartate(89)-[ribosomal protein uS12]-hydrogen + (sulfur carrier)-SH + AH2 + 2 S-adenosyl-L-methionine = 3-methylsulfanyl-L-aspartate(89)-[ribosomal protein uS12]-hydrogen + (sulfur carrier)-H + 5'-deoxyadenosine + L-methionine + A + S-adenosyl-L-homocysteine + 2 H(+). Functionally, catalyzes the methylthiolation of an aspartic acid residue of ribosomal protein uS12. This is Ribosomal protein uS12 methylthiotransferase RimO from Vibrio vulnificus (strain CMCP6).